A 385-amino-acid chain; its full sequence is MNNQFKLKNKKIKPVSILIILFVGFLFLISLIGFIFTSFYTIDLKLAIFFEKGFKYEIVRYWSIFYDILGTTELMVFILFNIMVLIESWFLLKSKTKKDNFWKKNKWILKLVYITVYVVFVVIKCITTYFKINADNGFGYGGDAIYLLSSKYRNICLIVSLVIHCIGLFVGFYIIHYKFKNDPIYLVDKYWIQAVKILFIVLISYTILVLLKGMTSRPYYYNIIYGDLLKQVKLNGHNDWVDHYLNQSTFKHGFNIGDNKYANNIPGEWPWYRINGGLFRPDKNLVQFKHWFDWAFPSGHIGATLIVGCTFFYFLTNNQKLTPLKITLLALYFLHLVSMSFAIVVNRGHWVSDITFTYLWLLPLIFLTHFFNSFFKFKDIGCKKY.

8 consecutive transmembrane segments (helical) span residues 17–37 (ILII…FIFT), 72–92 (TELM…WFLL), 107–127 (WILK…KCIT), 155–175 (ICLI…FYII), 191–211 (WIQA…LVLL), 295–315 (AFPS…FYFL), 326–346 (ITLL…IVVN), and 354–374 (ITFT…FNSF).

The protein localises to the membrane. This is an uncharacterized protein from Mycoplasma capricolum subsp. capricolum (strain California kid / ATCC 27343 / NCTC 10154).